A 489-amino-acid polypeptide reads, in one-letter code: MTAIVCVSLLSEKAVLVKNLTDHVKAFYESIIGRFVSGPDTITEKRTMDSVIARKIVPSSTVILDGYGESFIRENPNATLMDIVTSSNNTAPKTTYQSIMPAMSALLGVPYVQGAFRHGIISKHGGKKTSLIILVVAPPSGFIRAASVGSSSSVVEVDSNATIKLDDTVGINSAMIKNTKLVSAAGLTAMGIEEIPIKCNSLDSLIIGWSMKYFKGYVDGYKSGVRDQATTILLNTPFKDLFVENGAGRMLPNDSFRVSESTIKNQVIEMGEGTKPDALISTHGDVFIDSEAVFTSDEQEKYRKDKDEEFFKKCVCNHIIAGDYGNNVIIIENPPHSDVRGLGVKYSFQVNKPELDGTESNGIKYYSKDTPQQIHDAILDVISDTNKSLLMNSKPIERTGKEAIAVCFKNGFPKKFAMVEMEKNGVKIVGMGDSPMLVLDNYPSMLSRAEKANRKSSRAKIDAPVVKIDTEDLDTNTLLDVIKKEVGSR.

RNA-binding stretches follow at residues 129-251 and 321-351; these read TSLI…GRML and AGDYGNNVIIIENPPHSDVRGLGVKYSFQVN.

It belongs to the phytoreovirus protein P7 family.

It localises to the virion. It is found in the host cytoplasm. Functionally, probable component of the transcriptional machinery present in the inner capsid. Displays dsRNA binding activity and may play an important role in the sorting of viral RNA and virion assembly. Together with the RNA-directed RNA polymerase P1 and capping enzyme P5, forms an transcriptional complex positioned near the channels situated at each of the five-fold vertices of the core. This Rice gall dwarf virus (RGDV) protein is Protein P7.